We begin with the raw amino-acid sequence, 922 residues long: MLDSIIKILFGSKHERDIKAMLPILHKINEKEAWALSLSEEEFKAKTDEFRERYQKGESLDSFIPEAFALAREAARRILGERPYDVQILGSLVLHSGKIVEMKTGEGKTLMSVAAAYLNSLTGKGVHIVTVNDYLAERDADWMRPVYSYLGVSVGVILSNMENDARRIEYNCDITYGTNNEFGFDYLRDNMQMRLKDKTQREFSFAIVDEIDSILIDEARTPLIISGAAEDDTQRFFEVDRLIGQLKEVEKNPETGEYPNELEGEEVIGDYTIDEKSKRVSFTDSGMLHIQDILQRQGLIKSGNLFDEENFEYIHYFTQSVRAHVLFHIDVDYVIQDGQVQIVDEFTGRVLEGRRYSDGLHQAIEAKEHIKIAQRNRTLATITFQNFFRMYDKLSGMTGTADTEAVEFTKIYNLDVVVIPTNLPVARKDEHDVIYLNENDKFEALCTEISEAYKRGQPVLVGTVSIEKSELISKLLTKRGVRHEVLNAKNHEREALIIAEAGAKGSVTIATNMAGRGTDIKLGGSPEMRAKKRTGTNPNPDYYEKVLAEEYAKWQSDYNEVKELGGLYVIGTERHESRRIDNQLRGRSGRQGDPGRSKFFLSLDDDLMRLFGGENLKNVMSKIGMRAGEPIEHPWINKSIEKAQTKVENRNFDIRKHLLEYDDVLNEQRSFIYEQRNAILEDENLIERIYATLEEFISEKFDEYSSSSKAEKEERARLIKDIFREKFSYTLTEEDFANIDKKNHEEEINEFVEHFTKELKEKEALAGKENLNMFIRYQYLQAIDKKWLDHLENLESLREAVYLRSYGQKNPLTEYKLEGFDIFYSMLDDIRIEIASRLVRVQISTEEEAHASRQMRSIQGNAQHNSMGSFSGSGHGMGPTALSARSRPENAQVVRTVPKVGRNDPCPCGSGKKYKYCCGKNG.

ATP contacts are provided by residues glutamine 87, 105–109, and aspartate 519; that span reads GEGKT. The disordered stretch occupies residues 850–891; the sequence is HASRQMRSIQGNAQHNSMGSFSGSGHGMGPTALSARSRPENA. A compositionally biased stretch (polar residues) spans 854–865; the sequence is QMRSIQGNAQHN. The Zn(2+) site is built by cysteine 906, cysteine 908, cysteine 917, and cysteine 918.

This sequence belongs to the SecA family. In terms of assembly, monomer and homodimer. Part of the essential Sec protein translocation apparatus which comprises SecA, SecYEG and auxiliary proteins SecDF. Other proteins may also be involved. Requires Zn(2+) as cofactor.

Its subcellular location is the cell inner membrane. It localises to the cytoplasm. The enzyme catalyses ATP + H2O + cellular proteinSide 1 = ADP + phosphate + cellular proteinSide 2.. Its function is as follows. Part of the Sec protein translocase complex. Interacts with the SecYEG preprotein conducting channel. Has a central role in coupling the hydrolysis of ATP to the transfer of proteins into and across the cell membrane, serving as an ATP-driven molecular motor driving the stepwise translocation of polypeptide chains across the membrane. The chain is Protein translocase subunit SecA from Treponema denticola (strain ATCC 35405 / DSM 14222 / CIP 103919 / JCM 8153 / KCTC 15104).